The following is a 126-amino-acid chain: Large ribosomal subunit protein bL12 (126 aa).

This sequence belongs to the bacterial ribosomal protein bL12 family. In terms of assembly, homodimer. Part of the ribosomal stalk of the 50S ribosomal subunit. Forms a multimeric L10(L12)X complex, where L10 forms an elongated spine to which 2 to 4 L12 dimers bind in a sequential fashion. Binds GTP-bound translation factors.

Forms part of the ribosomal stalk which helps the ribosome interact with GTP-bound translation factors. Is thus essential for accurate translation. The protein is Large ribosomal subunit protein bL12 of Francisella tularensis subsp. mediasiatica (strain FSC147).